Here is a 244-residue protein sequence, read N- to C-terminus: 23S rRNA (guanosine-2'-O-)-methyltransferase RlmB (244 aa).

S-adenosyl-L-methionine is bound by residues G196, I216, and L225.

It belongs to the class IV-like SAM-binding methyltransferase superfamily. RNA methyltransferase TrmH family. RlmB subfamily. As to quaternary structure, homodimer.

The protein localises to the cytoplasm. It carries out the reaction guanosine(2251) in 23S rRNA + S-adenosyl-L-methionine = 2'-O-methylguanosine(2251) in 23S rRNA + S-adenosyl-L-homocysteine + H(+). Its function is as follows. Specifically methylates the ribose of guanosine 2251 in 23S rRNA. The chain is 23S rRNA (guanosine-2'-O-)-methyltransferase RlmB from Photorhabdus laumondii subsp. laumondii (strain DSM 15139 / CIP 105565 / TT01) (Photorhabdus luminescens subsp. laumondii).